The chain runs to 88 residues: Large ribosomal subunit protein bL27 (88 aa).

The disordered stretch occupies residues 1–24 (MATKKSGGSSGNGRDSRGRRLGVK).

It belongs to the bacterial ribosomal protein bL27 family.

This Ehrlichia chaffeensis (strain ATCC CRL-10679 / Arkansas) protein is Large ribosomal subunit protein bL27.